Reading from the N-terminus, the 1627-residue chain is Adhesin P1 (1627 aa).

The first 59 residues, 1–59 (MHQTKKTALSKSTWILILTATASLATGLTVVGHFTSTTTTLKRQQFSYTRPDEVALRHT), serve as a signal peptide directing secretion. 4 disordered regions span residues 219–238 (LPQQ…AMFG), 252–355 (NEKL…PWRP), 898–953 (WRND…TTQD), and 1274–1362 (SFGT…TGND). Positions 224-234 (TESGQNTSTTG) are enriched in polar residues. A compositionally biased stretch (low complexity) spans 261–276 (TGSSTTSGSGQSTQRG). Basic and acidic residues predominate over residues 282–297 (TKVKALKIEVKKKSDS). 3 stretches are compositionally biased toward polar residues: residues 903-933 (ASSG…SAGN), 939-953 (QDNI…TTQD), and 1274-1297 (SFGT…VFGT). The span at 1307 to 1320 (SGGGAGGGSSGSGQ) shows a compositional bias: gly residues. Low complexity predominate over residues 1341 to 1352 (STSDGNTSSTNN). The interval 1403–1415 (GPQSVKFKSPDQI) is cytadherence epitope. A helical membrane pass occupies residues 1527-1547 (AITVPIVVIVLSVTLGLAIGI). The interval 1589–1627 (QAPKRLKQTSAAKPGAPRPPVPPKPGAPKPPVQPPKKPA) is disordered. The segment covering 1604-1627 (APRPPVPPKPGAPKPPVQPPKKPA) has biased composition (pro residues).

It belongs to the adhesin P1 family.

The protein resides in the cell membrane. Its subcellular location is the cell projection. It is found in the attachment organelle. The protein localises to the cell surface. Functionally, the protein is the major adhesin mediating the attachment of this mycoplasma to respiratory epithelium. This Mycoplasma pneumoniae (strain ATCC 29342 / M129 / Subtype 1) (Mycoplasmoides pneumoniae) protein is Adhesin P1 (mgpA).